A 555-amino-acid polypeptide reads, in one-letter code: HERV-H_2q24.1 provirus ancestral Env polyprotein (555 aa).

A signal peptide spans Met-1–Pro-35. The Extracellular portion of the chain corresponds to Leu-36–Val-515. A glycan (N-linked (GlcNAc...) asparagine) is linked at Asn-47. A CXXC motif is present at residues Cys-64–Cys-67. N-linked (GlcNAc...) asparagine glycosylation is found at Asn-222, Asn-265, Asn-283, Asn-352, and Asn-370. The segment at Val-388–Ser-408 is fusion peptide. The N-linked (GlcNAc...) asparagine glycan is linked to Asn-475. Residues Leu-516–Phe-536 form a helical membrane-spanning segment. At His-537–Ile-555 the chain is on the cytoplasmic side.

This sequence belongs to the gamma type-C retroviral envelope protein family. HERV class-I H env subfamily. As to quaternary structure, the surface (SU) and transmembrane (TM) proteins form a heterodimer. SU and TM are attached by noncovalent interactions or by a labile interchain disulfide bond. Specific enzymatic cleavages in vivo yield the mature SU and TM proteins. Low expression in testis.

Its subcellular location is the virion. The protein localises to the cell membrane. Retroviral envelope proteins mediate receptor recognition and membrane fusion during early infection. Endogenous envelope proteins may have kept, lost or modified their original function during evolution. This endogenous envelope protein has lost its original fusogenic properties. In terms of biological role, SU mediates receptor recognition. Its function is as follows. TM anchors the envelope heterodimer to the viral membrane through one transmembrane domain. The other hydrophobic domain, called fusion peptide, mediates fusion of the viral membrane with the target cell membrane. This is HERV-H_2q24.1 provirus ancestral Env polyprotein from Homo sapiens (Human).